A 264-amino-acid polypeptide reads, in one-letter code: Virulence plasmid protein pGP3-D (264 aa).

The chain is Virulence plasmid protein pGP3-D from Chlamydia trachomatis serovar L2 (strain ATCC VR-902B / DSM 19102 / 434/Bu).